The primary structure comprises 732 residues: Ionotropic receptor 40a (732 aa).

The N-terminal stretch at 1 to 19 is a signal peptide; it reads MHKFLALGLLPYLLGLLNS. N-linked (GlcNAc...) asparagine glycans are attached at residues N18, N235, and N299. Residues 20–369 lie on the Extracellular side of the membrane; it reads TRLTFIGNDE…RPFKQDIWPH (350 aa). A helical membrane pass occupies residues 370-390; sequence LILTIIFSGPIFYGIIALPYI. Residues 391-465 are Cytoplasmic-facing; that stretch reads WRRRWANSDV…NELHNGYRAK (75 aa). The helical transmembrane segment at 466 to 486 threads the bilayer; the sequence is FLTIVYWIAATYVLADVYSAQ. The Extracellular segment spans residues 487–688; the sequence is LTSQFARPAR…LNLRMLQGAF (202 aa). N-linked (GlcNAc...) asparagine glycosylation is present at N531. Residues 689 to 709 traverse the membrane as a helical segment; the sequence is IALGVGSLAAGVILLLEIVFI. At 710–732 the chain is on the cytoplasmic side; sequence KLDQARLWMLCSRLQWIRYDRKV.

It belongs to the glutamate-gated ion channel (TC 1.A.10.1) family. In terms of tissue distribution, in the antenna, detected in sacculus neurons which innervate the first and second chambers (at protein level).

The protein localises to the cell membrane. Integral part of a neural sensory system in the antenna that provides the neural basis for the response to environmental changes in humidity (hygrosensation). Together with Ir25a and Ir93a, mediates the response of the hygrosensory sacculus neurons to changes in relative humidity and is required for dry detection behavior. The sequence is that of Ionotropic receptor 40a from Drosophila melanogaster (Fruit fly).